The primary structure comprises 655 residues: Sphingomyelin phosphodiesterase 3 (655 aa).

Residues 1-10 are Cytoplasmic-facing; the sequence is MVLYTTPFPN. Residues 11-31 constitute an intramembrane region (helical); sequence SCLSALHCVSWALIFPCYWLV. Topologically, residues 32-64 are cytoplasmic; it reads DRLAASFIPTTYEKRQRADDPCCLQLLCTALFT. Residues C53, C54, and C59 are each lipidated (S-palmitoyl cysteine). The segment at residues 65–85 is an intramembrane region (helical); sequence PIYLALLVASLPFAFLGFLFW. The Cytoplasmic portion of the chain corresponds to 86–655; sequence SPLQSARRPY…LMVSSGEEEA (570 aa). S178 is subject to Phosphoserine. Residues 210–319 are disordered; the sequence is VEYKGDGGRH…DTSASGEPGA (110 aa). Basic and acidic residues-rich tracts occupy residues 212–222 and 248–257; these read YKGDGGRHPGD and GGEEGGRPPE. Over residues 279–299 the composition is skewed to polar residues; the sequence is TPNHNQQDGDSGSLGSPSASR. S291 is modified (phosphoserine). E364 lines the Mg(2+) pocket. Residues C397 and C398 are each lipidated (S-palmitoyl cysteine). The active-site Proton acceptor is H639.

This sequence belongs to the neutral sphingomyelinase family. Requires Mg(2+) as cofactor. In terms of processing, palmitoylated, palmitoylation-deficient proteins are targeted for lysosomal degradation. Predominantly expressed in brain.

It is found in the golgi apparatus membrane. Its subcellular location is the cell membrane. The catalysed reaction is a sphingomyelin + H2O = phosphocholine + an N-acylsphing-4-enine + H(+). It carries out the reaction N-(15Z-tetracosenoyl)sphing-4-enine-1-phosphocholine + H2O = N-(15Z-tetracosenoyl)-sphing-4-enine + phosphocholine + H(+). It catalyses the reaction N-(tetracosanoyl)-sphing-4-enine-1-phosphocholine + H2O = N-tetracosanoyl-sphing-4-enine + phosphocholine + H(+). The enzyme catalyses an N-(acyl)-sphingosylphosphocholine + H2O = an N-acyl-sphingoid base + phosphocholine + H(+). The catalysed reaction is 1-hexadecanoyl-sn-glycero-3-phosphocholine + H2O = 1-hexadecanoyl-sn-glycerol + phosphocholine + H(+). It carries out the reaction 1-O-octadecyl-sn-glycero-3-phosphocholine + H2O = 1-O-octadecyl-sn-glycerol + phosphocholine + H(+). It catalyses the reaction a sphingosylphosphocholine + H2O = a sphingoid base + phosphocholine + H(+). The enzyme catalyses N-(hexadecanoyl)-sphing-4-enine-1-phosphocholine + H2O = N-hexadecanoylsphing-4-enine + phosphocholine + H(+). The protein operates within lipid metabolism; sphingolipid metabolism. Its activity is regulated as follows. Inhibited by nSMase inhibitor GW4869. Binding of anionic phospholipids (APLs) such as phosphatidylserine (PS) and phosphatidic acid (PA) increases enzymatic activity. Functionally, catalyzes the hydrolysis of sphingomyelin to form ceramide and phosphocholine. Ceramide mediates numerous cellular functions, such as apoptosis and growth arrest, and is capable of regulating these 2 cellular events independently. Also hydrolyzes sphingosylphosphocholine. Regulates the cell cycle by acting as a growth suppressor in confluent cells. Probably acts as a regulator of postnatal development and participates in bone and dentin mineralization. Binds to anionic phospholipids (APLs) such as phosphatidylserine (PS) and phosphatidic acid (PA) that modulate enzymatic activity and subcellular location. May be involved in IL-1-beta-induced JNK activation in hepatocytes. May act as a mediator in transcriptional regulation of NOS2/iNOS via the NF-kappa-B activation under inflammatory conditions. The polypeptide is Sphingomyelin phosphodiesterase 3 (Homo sapiens (Human)).